A 302-amino-acid polypeptide reads, in one-letter code: Pyridoxal 5'-phosphate synthase subunit PdxS (302 aa).

A D-ribose 5-phosphate-binding site is contributed by aspartate 32. The active-site Schiff-base intermediate with D-ribose 5-phosphate is lysine 89. Glycine 161 provides a ligand contact to D-ribose 5-phosphate. Position 173 (arginine 173) interacts with D-glyceraldehyde 3-phosphate. D-ribose 5-phosphate is bound by residues glycine 222 and 243–244 (GS). A disordered region spans residues 276 to 302 (ASNPGKGMKGEANADLSEGEKLQTRGV). The span at 293–302 (EGEKLQTRGV) shows a compositional bias: basic and acidic residues.

Belongs to the PdxS/SNZ family. In terms of assembly, in the presence of PdxT, forms a dodecamer of heterodimers.

It carries out the reaction aldehydo-D-ribose 5-phosphate + D-glyceraldehyde 3-phosphate + L-glutamine = pyridoxal 5'-phosphate + L-glutamate + phosphate + 3 H2O + H(+). It participates in cofactor biosynthesis; pyridoxal 5'-phosphate biosynthesis. In terms of biological role, catalyzes the formation of pyridoxal 5'-phosphate from ribose 5-phosphate (RBP), glyceraldehyde 3-phosphate (G3P) and ammonia. The ammonia is provided by the PdxT subunit. Can also use ribulose 5-phosphate and dihydroxyacetone phosphate as substrates, resulting from enzyme-catalyzed isomerization of RBP and G3P, respectively. The chain is Pyridoxal 5'-phosphate synthase subunit PdxS from Haloquadratum walsbyi (strain DSM 16790 / HBSQ001).